Consider the following 382-residue polypeptide: Mannitol-1-phosphate 5-dehydrogenase (382 aa).

Residue 3–14 (ALHFGAGNIGRG) coordinates NAD(+).

It belongs to the mannitol dehydrogenase family.

It carries out the reaction D-mannitol 1-phosphate + NAD(+) = beta-D-fructose 6-phosphate + NADH + H(+). The protein is Mannitol-1-phosphate 5-dehydrogenase of Klebsiella pneumoniae (strain 342).